The chain runs to 275 residues: Dermonecrotic toxin SpaSicTox-betaIIA3 (275 aa).

The active site involves His5. Positions 25 and 27 each coordinate Mg(2+). His41 functions as the Nucleophile in the catalytic mechanism. 2 disulfide bridges follow: Cys45–Cys51 and Cys47–Cys190. Asp85 contributes to the Mg(2+) binding site.

This sequence belongs to the arthropod phospholipase D family. Class II subfamily. It depends on Mg(2+) as a cofactor. As to expression, expressed by the venom gland.

The protein localises to the secreted. The catalysed reaction is an N-(acyl)-sphingosylphosphocholine = an N-(acyl)-sphingosyl-1,3-cyclic phosphate + choline. It catalyses the reaction an N-(acyl)-sphingosylphosphoethanolamine = an N-(acyl)-sphingosyl-1,3-cyclic phosphate + ethanolamine. It carries out the reaction a 1-acyl-sn-glycero-3-phosphocholine = a 1-acyl-sn-glycero-2,3-cyclic phosphate + choline. The enzyme catalyses a 1-acyl-sn-glycero-3-phosphoethanolamine = a 1-acyl-sn-glycero-2,3-cyclic phosphate + ethanolamine. In terms of biological role, dermonecrotic toxins cleave the phosphodiester linkage between the phosphate and headgroup of certain phospholipids (sphingolipid and lysolipid substrates), forming an alcohol (often choline) and a cyclic phosphate. This toxin acts on sphingomyelin (SM). It may also act on ceramide phosphoethanolamine (CPE), lysophosphatidylcholine (LPC) and lysophosphatidylethanolamine (LPE), but not on lysophosphatidylserine (LPS), and lysophosphatidylglycerol (LPG). It acts by transphosphatidylation, releasing exclusively cyclic phosphate products as second products. Induces dermonecrosis, hemolysis, increased vascular permeability, edema, inflammatory response, and platelet aggregation. The chain is Dermonecrotic toxin SpaSicTox-betaIIA3 from Sicarius patagonicus (Six-eyed sand spider).